The following is a 700-amino-acid chain: uncharacterized protein (700 aa).

9 helical membrane-spanning segments follow: residues 24 to 44, 67 to 87, 89 to 109, 115 to 135, 139 to 159, 383 to 403, 420 to 440, 461 to 481, and 491 to 511; these read VLCLPVAVGLMLGELRFGLLF, LIIGASLFATCSLLTQLLLAK, VPLPFLLTGLTLVLGVTAELG, LLPASLLAAIFTLSLAGYMPV, LLIYALGTLWYGLFNWFWFWI, LMGTALHLPKSYWILMTVLLV, VGTVVGLIIAGVALHFKIPEG, YGWATVGFTITAVYTLQLLWL, and LIDTIIGCLIAFGGTVWLWPQ.

It belongs to the YccS/YhfK family.

The protein localises to the cell membrane. This is an uncharacterized protein from Escherichia coli (strain K12).